The chain runs to 460 residues: GTPase Der (460 aa).

EngA-type G domains are found at residues 3-167 and 189-364; these read FTFA…PEPD and IRVA…ATWN. GTP is bound by residues 9–16, 56–60, 119–122, 195–202, 242–246, and 307–310; these read GRPNVGKS, DTAGL, NKSE, GRPNAGKS, and NKWD. The region spanning 365 to 449 is the KH-like domain; it reads RRVPTAALNR…PVRIMLREKA (85 aa).

It belongs to the TRAFAC class TrmE-Era-EngA-EngB-Septin-like GTPase superfamily. EngA (Der) GTPase family. Associates with the 50S ribosomal subunit.

Functionally, GTPase that plays an essential role in the late steps of ribosome biogenesis. The sequence is that of GTPase Der from Rhodopseudomonas palustris (strain BisA53).